The sequence spans 406 residues: Tryptophan synthase beta chain (406 aa).

N6-(pyridoxal phosphate)lysine is present on lysine 99.

It belongs to the TrpB family. As to quaternary structure, tetramer of two alpha and two beta chains. The cofactor is pyridoxal 5'-phosphate.

It catalyses the reaction (1S,2R)-1-C-(indol-3-yl)glycerol 3-phosphate + L-serine = D-glyceraldehyde 3-phosphate + L-tryptophan + H2O. It functions in the pathway amino-acid biosynthesis; L-tryptophan biosynthesis; L-tryptophan from chorismate: step 5/5. The beta subunit is responsible for the synthesis of L-tryptophan from indole and L-serine. The chain is Tryptophan synthase beta chain (trpB) from Agrobacterium fabrum (strain C58 / ATCC 33970) (Agrobacterium tumefaciens (strain C58)).